The primary structure comprises 242 residues: MILLSLYLCLAAMLHQSEGEASPKLPGLMTSNPDQQTEITDKHNNLRRIVEPTASNMLKMTWSNKIAQNAQRSANQCTLEHTSKEERTIDGVECGENLFFSSAPYTWSYAIQNWFDERKYFRFNYGPTAQNVMIGHYTQVVWYRSYELGCAIAYCPDQPTYKYYQVCQYCPGGNIRSRKYTPYSIGPPCGDCPDACDNGLCTNPCKQNDVYNNCPDLKKQVGCGHPIMKDCMATCKCLTEIK.

The N-terminal stretch at 1–19 (MILLSLYLCLAAMLHQSEG) is a signal peptide. The 129-residue stretch at 41–169 (DKHNNLRRIV…TYKYYQVCQY (129 aa)) folds into the SCP domain. Cystine bridges form between C77/C155, C94/C170, C150/C167, C189/C196, C192/C201, C205/C237, C214/C231, and C223/C235. Residues 205–237 (CKQNDVYNNCPDLKKQVGCGHPIMKDCMATCKC) enclose the ShKT domain.

It belongs to the CRISP family. Expressed by the venom gland.

The protein localises to the secreted. In terms of biological role, alters a variety of ion channel activities, including voltage-gated potassium channels (Kv), voltage-gated calcium channels (L-, N-, and P-type) (Cav) and ryanodine receptors (RyR). Is toxic to mice (causes lethargy, partial paralysis of rear limbs and lowering of body temperature). The polypeptide is Cysteine-rich venom protein helothermine (Heloderma horridum horridum (Mexican beaded lizard)).